We begin with the raw amino-acid sequence, 118 residues long: Large ribosomal subunit protein bL20 (118 aa).

Belongs to the bacterial ribosomal protein bL20 family.

Functionally, binds directly to 23S ribosomal RNA and is necessary for the in vitro assembly process of the 50S ribosomal subunit. It is not involved in the protein synthesizing functions of that subunit. The polypeptide is Large ribosomal subunit protein bL20 (Pseudomonas fluorescens (strain SBW25)).